Reading from the N-terminus, the 138-residue chain is MLMPKRTKFRKQQKGQFAGLSKGATFVDFGEFGMQTLERGWITSRQIEACRVAINRYLKRKGKVWIRVFPDKSVTKKPAETRMGKGKGAPDHWVVVVRPGRILFEVANVSKEDAQDALRRAAAKLGIRTRFVKRVERV.

This sequence belongs to the universal ribosomal protein uL16 family. As to quaternary structure, part of the 50S ribosomal subunit.

In terms of biological role, binds 23S rRNA and is also seen to make contacts with the A and possibly P site tRNAs. The chain is Large ribosomal subunit protein uL16 from Chlamydia trachomatis serovar D (strain ATCC VR-885 / DSM 19411 / UW-3/Cx).